The chain runs to 217 residues: LexA repressor (217 aa).

Residues 28-48 (RAEIAAEFGFSSPNAAEEHLR) constitute a DNA-binding region (H-T-H motif). Residues serine 136 and lysine 173 each act as for autocatalytic cleavage activity in the active site.

The protein belongs to the peptidase S24 family. As to quaternary structure, homodimer.

The catalysed reaction is Hydrolysis of Ala-|-Gly bond in repressor LexA.. Its function is as follows. Represses a number of genes involved in the response to DNA damage (SOS response), including recA and lexA. In the presence of single-stranded DNA, RecA interacts with LexA causing an autocatalytic cleavage which disrupts the DNA-binding part of LexA, leading to derepression of the SOS regulon and eventually DNA repair. In Cupriavidus necator (strain ATCC 17699 / DSM 428 / KCTC 22496 / NCIMB 10442 / H16 / Stanier 337) (Ralstonia eutropha), this protein is LexA repressor.